A 37-amino-acid polypeptide reads, in one-letter code: Large ribosomal subunit protein bL36 (37 aa).

The protein belongs to the bacterial ribosomal protein bL36 family.

The protein is Large ribosomal subunit protein bL36 of Aliivibrio fischeri (strain ATCC 700601 / ES114) (Vibrio fischeri).